A 306-amino-acid chain; its full sequence is Secretory carrier-associated membrane protein 1 (306 aa).

The interval 1 to 66 is disordered; it reads MAGRYDSNPF…LPPEPAAFGA (66 aa). The Cytoplasmic segment spans residues 1–141; sequence MAGRYDSNPF…EIPSHLQRMQ (141 aa). Positions 25 to 36 are enriched in gly residues; it reads KAGGQPSYGGGA. Low complexity predominate over residues 40-55; sequence PNPRNVPSVSSNSRLS. Residues 72-109 adopt a coiled-coil conformation; it reads LDSSKDLKNREKELQAREAELNKREKELKRREEAAARA. The next 4 helical transmembrane spans lie at 142–162, 174–194, 209–229, and 257–277; these read YVAF…VIAV, IWLL…VLWY, FGLF…SAVA, and IFYF…IWVI. The Cytoplasmic portion of the chain corresponds to 278-306; it reads QQVYMYFRGSGKAAEMKRDATRGAMRAAF.

This sequence belongs to the SCAMP family.

It localises to the cell membrane. It is found in the cytoplasmic vesicle. Its subcellular location is the secretory vesicle membrane. In terms of biological role, probably involved in membrane trafficking. The protein is Secretory carrier-associated membrane protein 1 (SCAMP1) of Oryza sativa subsp. japonica (Rice).